Consider the following 121-residue polypeptide: LOB domain-containing protein 23 (121 aa).

In terms of domain architecture, LOB spans 4–105 (KRCAACKYLR…NELAKTQAEI (102 aa)).

Belongs to the LOB domain-containing protein family.

The sequence is that of LOB domain-containing protein 23 (LBD23) from Arabidopsis thaliana (Mouse-ear cress).